The primary structure comprises 324 residues: Phospho-N-acetylmuramoyl-pentapeptide-transferase (324 aa).

10 helical membrane passes run 5–25 (VILFTIIMGFLISVLISPILI), 50–70 (GTPTMGGVMIIVSIAITAIVM), 77–97 (LSAEMFLLLFVTIGYGLLGFL), 117–137 (LIGQIIIAIVFYGVYHYCHFS), 147–167 (LSIDLGWGYFILVLFMLVGGS), 176–196 (LDGLLSGTAAIAFGAFAILAW), 203–223 (VAIFSVAVVGAVLGFLVFNAH), 227–247 (VFMGDTGSLALGGAIVTVAIL), 250–270 (LEILLVIIGGVFVIETLSVIL), and 302–322 (VVVTFWTAGLLLAVLGIYIEV).

Belongs to the glycosyltransferase 4 family. MraY subfamily. Mg(2+) serves as cofactor.

It is found in the cell membrane. The enzyme catalyses UDP-N-acetyl-alpha-D-muramoyl-L-alanyl-gamma-D-glutamyl-meso-2,6-diaminopimeloyl-D-alanyl-D-alanine + di-trans,octa-cis-undecaprenyl phosphate = di-trans,octa-cis-undecaprenyl diphospho-N-acetyl-alpha-D-muramoyl-L-alanyl-D-glutamyl-meso-2,6-diaminopimeloyl-D-alanyl-D-alanine + UMP. It participates in cell wall biogenesis; peptidoglycan biosynthesis. Functionally, catalyzes the initial step of the lipid cycle reactions in the biosynthesis of the cell wall peptidoglycan: transfers peptidoglycan precursor phospho-MurNAc-pentapeptide from UDP-MurNAc-pentapeptide onto the lipid carrier undecaprenyl phosphate, yielding undecaprenyl-pyrophosphoryl-MurNAc-pentapeptide, known as lipid I. The chain is Phospho-N-acetylmuramoyl-pentapeptide-transferase from Bacillus velezensis (strain DSM 23117 / BGSC 10A6 / LMG 26770 / FZB42) (Bacillus amyloliquefaciens subsp. plantarum).